We begin with the raw amino-acid sequence, 284 residues long: 1D-myo-inositol 2-acetamido-2-deoxy-alpha-D-glucopyranoside deacetylase (284 aa).

Positions 12, 15, and 146 each coordinate Zn(2+).

Belongs to the MshB deacetylase family. Zn(2+) serves as cofactor.

It carries out the reaction 1D-myo-inositol 2-acetamido-2-deoxy-alpha-D-glucopyranoside + H2O = 1D-myo-inositol 2-amino-2-deoxy-alpha-D-glucopyranoside + acetate. Functionally, catalyzes the deacetylation of 1D-myo-inositol 2-acetamido-2-deoxy-alpha-D-glucopyranoside (GlcNAc-Ins) in the mycothiol biosynthesis pathway. This chain is 1D-myo-inositol 2-acetamido-2-deoxy-alpha-D-glucopyranoside deacetylase, found in Mycolicibacterium gilvum (strain PYR-GCK) (Mycobacterium gilvum (strain PYR-GCK)).